Consider the following 511-residue polypeptide: Phosphoenolpyruvate carboxylase (511 aa).

This sequence belongs to the PEPCase type 2 family. As to quaternary structure, homotetramer. Requires Mg(2+) as cofactor.

It catalyses the reaction oxaloacetate + phosphate = phosphoenolpyruvate + hydrogencarbonate. Catalyzes the irreversible beta-carboxylation of phosphoenolpyruvate (PEP) to form oxaloacetate (OAA), a four-carbon dicarboxylic acid source for the tricarboxylic acid cycle. This is Phosphoenolpyruvate carboxylase from Saccharolobus islandicus (strain M.16.27) (Sulfolobus islandicus).